Here is a 205-residue protein sequence, read N- to C-terminus: Large ribosomal subunit protein uL3 (205 aa).

Belongs to the universal ribosomal protein uL3 family. In terms of assembly, part of the 50S ribosomal subunit. Forms a cluster with proteins L14 and L19.

One of the primary rRNA binding proteins, it binds directly near the 3'-end of the 23S rRNA, where it nucleates assembly of the 50S subunit. This is Large ribosomal subunit protein uL3 from Parabacteroides distasonis (strain ATCC 8503 / DSM 20701 / CIP 104284 / JCM 5825 / NCTC 11152).